Consider the following 657-residue polypeptide: Hemocyanin A chain (657 aa).

A disulfide bridge connects residues C93 and C98. An N-linked (GlcNAc...) asparagine glycan is attached at N167. Cu cation contacts are provided by H194, H198, H224, H344, H348, and H384. 2 disulfide bridges follow: C483/C502 and C562/C609. The tract at residues 594–616 (EGHNGGHDYGGTHAQCGVHGEAY) is disordered.

This sequence belongs to the tyrosinase family. Hemocyanin subfamily. Hexamer of a number of different chains, of which A, B, and C have been identified. In terms of tissue distribution, hemolymph.

The protein resides in the secreted. It localises to the extracellular space. In terms of biological role, hemocyanins are copper-containing oxygen carriers occurring freely dissolved in the hemolymph of many mollusks and arthropods. This is Hemocyanin A chain from Panulirus interruptus (California spiny lobster).